The chain runs to 59 residues: Large ribosomal subunit protein uL30 (59 aa).

Belongs to the universal ribosomal protein uL30 family. Part of the 50S ribosomal subunit.

The protein is Large ribosomal subunit protein uL30 of Alkaliphilus metalliredigens (strain QYMF).